The chain runs to 155 residues: uncharacterized protein (155 aa).

The next 2 helical transmembrane spans lie at 33–53 and 83–103; these read ITLL…LFLL and IGAV…GIWV.

It to E.coli YdgK.

It localises to the cell membrane. This is an uncharacterized protein from Synechocystis sp. (strain ATCC 27184 / PCC 6803 / Kazusa).